The following is a 270-amino-acid chain: uncharacterized protein (270 aa).

This is an uncharacterized protein from Archaeoglobus fulgidus (strain ATCC 49558 / DSM 4304 / JCM 9628 / NBRC 100126 / VC-16).